The primary structure comprises 324 residues: Delta-aminolevulinic acid dehydratase (324 aa).

Residues C118, C120, and C128 each contribute to the Zn(2+) site. K195 serves as the catalytic Schiff-base intermediate with substrate. R205 and R217 together coordinate 5-aminolevulinate. Position 233 (E233) interacts with Mg(2+). The active-site Schiff-base intermediate with substrate is K248. 5-aminolevulinate-binding residues include S274 and Y313.

This sequence belongs to the ALAD family. As to quaternary structure, homooctamer. Zn(2+) serves as cofactor.

The catalysed reaction is 2 5-aminolevulinate = porphobilinogen + 2 H2O + H(+). It participates in porphyrin-containing compound metabolism; protoporphyrin-IX biosynthesis; coproporphyrinogen-III from 5-aminolevulinate: step 1/4. Functionally, catalyzes an early step in the biosynthesis of tetrapyrroles. Binds two molecules of 5-aminolevulinate per subunit, each at a distinct site, and catalyzes their condensation to form porphobilinogen. This chain is Delta-aminolevulinic acid dehydratase (hemB), found in Staphylococcus aureus (strain NCTC 8325 / PS 47).